The following is a 622-amino-acid chain: Signal recognition particle subunit SRP68 (622 aa).

Positions 576–622 are disordered; sequence RDATPKKAAKGSSAAAASSKTSNQEEEEQQGLTGMLSGWKKSFWGNK. Residues 585-595 show a composition bias toward low complexity; it reads KGSSAAAASSK.

Belongs to the SRP68 family. As to quaternary structure, heterodimer with srpa-72. Srpa-68/srpa-72 heterodimer formation is stabilized by the presence of 7SL RNA. Component of a signal recognition particle (SRP) complex that consists of a 7SL RNA molecule of 300 nucleotides and six protein subunits: srpa-72, srpa-68, SRP54, F37F2.2/SRP19, F25G6.8/SRP14 and ZK512.4/SRP9. Within the SRP complex, interacts (via C-terminus) with srpa-72 (via N-terminus).

The protein localises to the cytoplasm. It localises to the nucleus. Its subcellular location is the nucleolus. It is found in the endoplasmic reticulum. Component of the signal recognition particle (SRP) complex, a ribonucleoprotein complex that mediates the cotranslational targeting of secretory and membrane proteins to the endoplasmic reticulum (ER). The SRP complex interacts with the signal sequence in nascent secretory and membrane proteins and directs them to the membrane of the ER. The SRP complex targets the ribosome-nascent chain complex to the SRP receptor (SR), which is anchored in the ER, where SR compaction and GTPase rearrangement drive cotranslational protein translocation into the ER. Binds the signal recognition particle RNA (7SL RNA), srpa-72 binds to this complex subsequently. The SRP complex possibly participates in the elongation arrest function. In Caenorhabditis elegans, this protein is Signal recognition particle subunit SRP68.